The chain runs to 200 residues: Dephospho-CoA kinase (200 aa).

One can recognise a DPCK domain in the interval 3 to 200 (KVGLTGGIGS…EELQRRLHSR (198 aa)). 11 to 16 (GSGKSS) provides a ligand contact to ATP.

This sequence belongs to the CoaE family.

Its subcellular location is the cytoplasm. It carries out the reaction 3'-dephospho-CoA + ATP = ADP + CoA + H(+). It participates in cofactor biosynthesis; coenzyme A biosynthesis; CoA from (R)-pantothenate: step 5/5. Catalyzes the phosphorylation of the 3'-hydroxyl group of dephosphocoenzyme A to form coenzyme A. In Thermobifida fusca (strain YX), this protein is Dephospho-CoA kinase.